A 143-amino-acid chain; its full sequence is Transcriptional regulator MraZ (143 aa).

SpoVT-AbrB domains lie at 5–47 (EYKH…SLKE) and 76–119 (ACEC…SENN).

Belongs to the MraZ family. In terms of assembly, forms oligomers.

Its subcellular location is the cytoplasm. It is found in the nucleoid. This chain is Transcriptional regulator MraZ, found in Caldicellulosiruptor bescii (strain ATCC BAA-1888 / DSM 6725 / KCTC 15123 / Z-1320) (Anaerocellum thermophilum).